A 146-amino-acid chain; its full sequence is Cytochrome b5 type B (146 aa).

Residues 1-11 (MATPEASGSGR) constitute a propeptide that is removed on maturation. Positions 20–96 (VTYYRLEEVA…LKQYYIGDVH (77 aa)) constitute a Cytochrome b5 heme-binding domain. N6-acetyllysine is present on lysine 30. 2 residues coordinate heme: histidine 55 and histidine 79. At serine 80 the chain carries Phosphoserine. The chain crosses the membrane as a helical span at residues 119–136 (WAYWIVPIVGAILIGFLY).

This sequence belongs to the cytochrome b5 family. In terms of assembly, component of a complex composed of cytochrome b5, NADH-cytochrome b5 reductase (CYB5R3) and MTARC2.

It is found in the mitochondrion outer membrane. Functionally, cytochrome b5 is a membrane-bound hemoprotein functioning as an electron carrier for several membrane-bound oxygenases. The polypeptide is Cytochrome b5 type B (Cyb5b) (Rattus norvegicus (Rat)).